The chain runs to 490 residues: Aspartyl/glutamyl-tRNA(Asn/Gln) amidotransferase subunit B (490 aa).

The protein belongs to the GatB/GatE family. GatB subfamily. Heterotrimer of A, B and C subunits.

The enzyme catalyses L-glutamyl-tRNA(Gln) + L-glutamine + ATP + H2O = L-glutaminyl-tRNA(Gln) + L-glutamate + ADP + phosphate + H(+). It carries out the reaction L-aspartyl-tRNA(Asn) + L-glutamine + ATP + H2O = L-asparaginyl-tRNA(Asn) + L-glutamate + ADP + phosphate + 2 H(+). Its function is as follows. Allows the formation of correctly charged Asn-tRNA(Asn) or Gln-tRNA(Gln) through the transamidation of misacylated Asp-tRNA(Asn) or Glu-tRNA(Gln) in organisms which lack either or both of asparaginyl-tRNA or glutaminyl-tRNA synthetases. The reaction takes place in the presence of glutamine and ATP through an activated phospho-Asp-tRNA(Asn) or phospho-Glu-tRNA(Gln). This chain is Aspartyl/glutamyl-tRNA(Asn/Gln) amidotransferase subunit B, found in Prochlorococcus marinus (strain MIT 9515).